Consider the following 314-residue polypeptide: tRNA dimethylallyltransferase 2 (314 aa).

Position 8–15 (glycine 8–serine 15) interacts with ATP. Residue threonine 10–serine 15 coordinates substrate.

This sequence belongs to the IPP transferase family. Monomer. Requires Mg(2+) as cofactor.

It carries out the reaction adenosine(37) in tRNA + dimethylallyl diphosphate = N(6)-dimethylallyladenosine(37) in tRNA + diphosphate. Catalyzes the transfer of a dimethylallyl group onto the adenine at position 37 in tRNAs that read codons beginning with uridine, leading to the formation of N6-(dimethylallyl)adenosine (i(6)A). In Mycobacterium marinum (strain ATCC BAA-535 / M), this protein is tRNA dimethylallyltransferase 2.